The primary structure comprises 986 residues: Mediator of RNA polymerase II transcription subunit 24 (986 aa).

6 short sequence motifs (LXXLL motif) span residues 128–132 (LNWLL), 341–345 (LTPLL), 445–449 (LDLLL), 554–558 (LVALL), 785–789 (LPNLL), and 855–859 (LMRLL).

Belongs to the Mediator complex subunit 24 family. Component of the Mediator complex.

It localises to the nucleus. Its function is as follows. Component of the Mediator complex, a coactivator involved in the regulated transcription of nearly all RNA polymerase II-dependent genes. Mediator functions as a bridge to convey information from gene-specific regulatory proteins to the basal RNA polymerase II transcription machinery. Mediator is recruited to promoters by direct interactions with regulatory proteins and serves as a scaffold for the assembly of a functional preinitiation complex with RNA polymerase II and the general transcription factors. This is Mediator of RNA polymerase II transcription subunit 24 (MED24) from Gallus gallus (Chicken).